Reading from the N-terminus, the 314-residue chain is Olfactory receptor 1Q1 (314 aa).

Over 1–25 the chain is Extracellular; that stretch reads MDNSNWTSVSHFVLLGISTHPEEQI. A glycan (N-linked (GlcNAc...) asparagine) is linked at asparagine 5. The chain crosses the membrane as a helical span at residues 26-49; that stretch reads PLFLVFSLMYAINISGNLAIITLI. Over 50–57 the chain is Cytoplasmic; sequence LSAPRLHI. A helical membrane pass occupies residues 58 to 79; that stretch reads PMYIFLSNLALTDICFTSTTVP. At 80-100 the chain is on the extracellular side; sequence KMLQIIFSPTKVISYTGCLAQ. A disulfide bond links cysteine 97 and cysteine 189. A helical transmembrane segment spans residues 101 to 120; sequence TYFFICFAVMENFILAVMAY. The Cytoplasmic segment spans residues 121–139; sequence DRYIAICHPFHYTMILTRM. Residues 140–158 traverse the membrane as a helical segment; sequence LCVKMVVMCHALSHLHAML. The Extracellular portion of the chain corresponds to 159-195; it reads HTFLIGQLIFCADNRIPHFFCDLYALMKISCTSTYLN. A helical membrane pass occupies residues 196–219; that stretch reads TLMIHTEGAVVISGALAFITASYA. At 220 to 236 the chain is on the cytoplasmic side; it reads CIILVVLRIPSAKGRWK. A helical membrane pass occupies residues 237–259; it reads TFSTCGSHLTVVAIFYGTLSWVY. At 260–272 the chain is on the extracellular side; the sequence is FRPLSSYSVTKGR. The helical transmembrane segment at 273 to 292 threads the bilayer; the sequence is IITVVYTVVTPMLNPFIYSL. Residues 293–314 lie on the Cytoplasmic side of the membrane; sequence RNGDVKGGFMKWMSRMQTFFFR.

The protein belongs to the G-protein coupled receptor 1 family.

Its subcellular location is the cell membrane. Odorant receptor. The sequence is that of Olfactory receptor 1Q1 (OR1Q1) from Homo sapiens (Human).